Consider the following 264-residue polypeptide: Diphthine synthase (264 aa).

Residues leucine 10, aspartate 87, valine 90, serine 115–isoleucine 116, leucine 166, alanine 209, and histidine 234 each bind S-adenosyl-L-methionine.

Belongs to the diphthine synthase family. As to quaternary structure, homodimer.

The catalysed reaction is 2-[(3S)-amino-3-carboxypropyl]-L-histidyl-[translation elongation factor 2] + 3 S-adenosyl-L-methionine = diphthine-[translation elongation factor 2] + 3 S-adenosyl-L-homocysteine + 3 H(+). The protein operates within protein modification; peptidyl-diphthamide biosynthesis. Its function is as follows. S-adenosyl-L-methionine-dependent methyltransferase that catalyzes the trimethylation of the amino group of the modified target histidine residue in translation elongation factor 2 (EF-2), to form an intermediate called diphthine. The three successive methylation reactions represent the second step of diphthamide biosynthesis. In Thermococcus onnurineus (strain NA1), this protein is Diphthine synthase.